We begin with the raw amino-acid sequence, 1059 residues long: Disks large-associated protein 2 (1059 aa).

2 disordered regions span residues 31–54 (GEPE…PAEE) and 245–311 (KSHS…SDST). The segment covering 245-261 (KSHSLEGSSKSNINGTK) has biased composition (polar residues). The span at 262–271 (SDSRVDDHHQ) shows a compositional bias: basic and acidic residues. The span at 272–285 (SHLSKHSKRSKSKE) shows a compositional bias: basic residues. Phosphoserine is present on residues serine 302, serine 308, serine 390, and serine 456. Residues 613–669 (YKKTPPPVPPRTTSKPLISVTAQSSTESTQDAYQDSRAQRMSPWPQDSRGGLYNSMD) form a disordered region. The span at 632-645 (VTAQSSTESTQDAY) shows a compositional bias: polar residues. Serine 667, serine 670, serine 673, and serine 720 each carry phosphoserine. The interval 723–756 (VQDSEFPDHQPYPRSDVETATDSDTESRGLREYH) is disordered. A Phosphothreonine modification is found at threonine 743. At serine 745 the chain carries Phosphoserine. Positions 747–756 (TESRGLREYH) are enriched in basic and acidic residues. Serine 776, serine 811, serine 983, and serine 1012 each carry phosphoserine. A disordered region spans residues 985–1025 (ERKEERKIPPPIPKKPPKGKFPITREKSLDLPDRQRQEARR). The segment covering 1007–1025 (ITREKSLDLPDRQRQEARR) has biased composition (basic and acidic residues).

This sequence belongs to the SAPAP family. Interacts with DLG4/PSD-95. In terms of tissue distribution, expressed in various brain areas.

The protein resides in the cell membrane. The protein localises to the postsynaptic density. It is found in the synapse. Functionally, may play a role in the molecular organization of synapses and neuronal cell signaling. Could be an adapter protein linking ion channel to the subsynaptic cytoskeleton. May induce enrichment of PSD-95/SAP90 at the plasma membrane. This is Disks large-associated protein 2 from Mus musculus (Mouse).